We begin with the raw amino-acid sequence, 500 residues long: L-arabinose isomerase (500 aa).

Mn(2+) is bound by residues E306, E333, H350, and H450.

The protein belongs to the arabinose isomerase family. In terms of assembly, homohexamer. It depends on Mn(2+) as a cofactor.

The enzyme catalyses beta-L-arabinopyranose = L-ribulose. It participates in carbohydrate degradation; L-arabinose degradation via L-ribulose; D-xylulose 5-phosphate from L-arabinose (bacterial route): step 1/3. Its function is as follows. Catalyzes the conversion of L-arabinose to L-ribulose. In Shigella flexneri serotype 5b (strain 8401), this protein is L-arabinose isomerase.